The sequence spans 157 residues: Protein FAM219A (157 aa).

Residue Met-1 is modified to N-acetylmethionine. The interval 1-103 (MMEEIDRFQD…SRYSSSGYSS (103 aa)) is disordered. The span at 17-33 (SDRDCDAREEKQRELAR) shows a compositional bias: basic and acidic residues. Polar residues predominate over residues 38–52 (KNGSMGSPVNQQPKK). Residues Ser-44 and Ser-74 each carry the phosphoserine modification. Thr-85 carries the post-translational modification Phosphothreonine. A phosphoserine mark is found at Ser-87 and Ser-94. Residues 94-103 (SRYSSSGYSS) show a composition bias toward low complexity.

It belongs to the FAM219 family.

This chain is Protein FAM219A (Fam219a), found in Mus musculus (Mouse).